The chain runs to 61 residues: Metallothionein-1E (61 aa).

Position 1 is an N-acetylmethionine (methionine 1). Positions 1–29 (MDPNCSCPTGGSCSCAGSCTCKACRCTSC) are beta. Residues cysteine 5, cysteine 7, cysteine 13, cysteine 15, cysteine 19, cysteine 21, cysteine 24, cysteine 26, cysteine 29, cysteine 33, cysteine 34, cysteine 36, cysteine 37, cysteine 41, cysteine 44, cysteine 48, cysteine 50, cysteine 57, cysteine 59, and cysteine 60 each coordinate a divalent metal cation. Residues 30-61 (KKSCCSCCPVGCAKCAQGCICKGASDKCSCCA) are alpha.

The protein belongs to the metallothionein superfamily. Type 1 family. Monomer.

In terms of biological role, metallothioneins have a high content of cysteine residues that bind various heavy metals; these proteins are transcriptionally regulated by both heavy metals and glucocorticoids. The chain is Metallothionein-1E (MT1E) from Sus scrofa (Pig).